The sequence spans 364 residues: tRNA 2-selenouridine synthase (364 aa).

In terms of domain architecture, Rhodanese spans 14–137 (LLADTPLIDV…LRQTAIQATW (124 aa)). The active-site S-selanylcysteine intermediate is the Cys-97.

The protein belongs to the SelU family. In terms of assembly, monomer.

It carries out the reaction 5-methylaminomethyl-2-thiouridine(34) in tRNA + selenophosphate + (2E)-geranyl diphosphate + H2O + H(+) = 5-methylaminomethyl-2-selenouridine(34) in tRNA + (2E)-thiogeraniol + phosphate + diphosphate. The enzyme catalyses 5-methylaminomethyl-2-thiouridine(34) in tRNA + (2E)-geranyl diphosphate = 5-methylaminomethyl-S-(2E)-geranyl-thiouridine(34) in tRNA + diphosphate. The catalysed reaction is 5-methylaminomethyl-S-(2E)-geranyl-thiouridine(34) in tRNA + selenophosphate + H(+) = 5-methylaminomethyl-2-(Se-phospho)selenouridine(34) in tRNA + (2E)-thiogeraniol. It catalyses the reaction 5-methylaminomethyl-2-(Se-phospho)selenouridine(34) in tRNA + H2O = 5-methylaminomethyl-2-selenouridine(34) in tRNA + phosphate. Functionally, involved in the post-transcriptional modification of the uridine at the wobble position (U34) of tRNA(Lys), tRNA(Glu) and tRNA(Gln). Catalyzes the conversion of 2-thiouridine (S2U-RNA) to 2-selenouridine (Se2U-RNA). Acts in a two-step process involving geranylation of 2-thiouridine (S2U) to S-geranyl-2-thiouridine (geS2U) and subsequent selenation of the latter derivative to 2-selenouridine (Se2U) in the tRNA chain. This chain is tRNA 2-selenouridine synthase, found in Salmonella agona (strain SL483).